The sequence spans 269 residues: NAD kinase (269 aa).

Residue aspartate 62 is the Proton acceptor of the active site. Residues 62–63, 130–131, lysine 141, arginine 158, aspartate 160, 171–176, alanine 195, and glutamine 229 contribute to the NAD(+) site; these read DG, NE, and TAYAMS.

This sequence belongs to the NAD kinase family. A divalent metal cation serves as cofactor.

The protein resides in the cytoplasm. It catalyses the reaction NAD(+) + ATP = ADP + NADP(+) + H(+). In terms of biological role, involved in the regulation of the intracellular balance of NAD and NADP, and is a key enzyme in the biosynthesis of NADP. Catalyzes specifically the phosphorylation on 2'-hydroxyl of the adenosine moiety of NAD to yield NADP. In Methanospirillum hungatei JF-1 (strain ATCC 27890 / DSM 864 / NBRC 100397 / JF-1), this protein is NAD kinase.